Reading from the N-terminus, the 247-residue chain is MIPMMTLKRVCRVLLFITQMYVLSGRGFLSFEYSEPVAQPLKDHFPSSTIATSTKATATKIPDYMEKCPSNGQCSRLPSDCMTCATNYSCIYGKPVTFNCTAKNGVVCFDVNSQPQEYFTISMTCQFCWQLPPSDYVCNLSSSCKTVSCPRQRYNTTCTVLDHAHCLGNRTFPKMLYCNWTGGYKWSTALALSITLGGFGADRFYLGQWREGLGKLFSFGGLGIWTLIDVFLISVGYVGPADGSLYI.

The first 25 residues, 1-25, serve as a signal peptide directing secretion; sequence MIPMMTLKRVCRVLLFITQMYVLSG. Topologically, residues 26–179 are extracellular; sequence RGFLSFEYSE…RTFPKMLYCN (154 aa). N-linked (GlcNAc...) asparagine glycosylation is found at N87, N99, N139, N155, N169, and N179. Residues 180–200 form a helical membrane-spanning segment; it reads WTGGYKWSTALALSITLGGFG. In terms of domain architecture, TM2 spans 183-231; the sequence is GYKWSTALALSITLGGFGADRFYLGQWREGLGKLFSFGGLGIWTLIDVF. The Cytoplasmic portion of the chain corresponds to 201–215; sequence ADRFYLGQWREGLGK. Residues 216-236 traverse the membrane as a helical segment; that stretch reads LFSFGGLGIWTLIDVFLISVG. At 237–247 the chain is on the extracellular side; the sequence is YVGPADGSLYI.

This sequence belongs to the TM2 family.

The protein resides in the membrane. The chain is TM2 domain-containing protein 3 (tm2d3) from Xenopus tropicalis (Western clawed frog).